Reading from the N-terminus, the 230-residue chain is NADH dehydrogenase [ubiquinone] iron-sulfur protein 8, mitochondrial (230 aa).

A mitochondrion-targeting transit peptide spans 1 to 42 (MAAILARKSLSALRSRQLVLAGQAWQQGANTSNGTLLGTRTF). 4Fe-4S ferredoxin-type domains lie at 122–151 (RRYP…IEAE) and 161–190 (TRYD…EGPN). 8 residues coordinate [4Fe-4S] cluster: cysteine 131, cysteine 134, cysteine 137, cysteine 141, cysteine 170, cysteine 173, cysteine 176, and cysteine 180.

The protein belongs to the complex I 23 kDa subunit family. As to quaternary structure, complex I is composed of about 45 different subunits. This is a component of the iron-sulfur (IP) fragment of the enzyme. It depends on [4Fe-4S] cluster as a cofactor.

The protein resides in the mitochondrion. It carries out the reaction a ubiquinone + NADH + 5 H(+)(in) = a ubiquinol + NAD(+) + 4 H(+)(out). In terms of biological role, core subunit of the mitochondrial membrane respiratory chain NADH dehydrogenase (Complex I) that is believed to belong to the minimal assembly required for catalysis. Complex I functions in the transfer of electrons from NADH to the respiratory chain. The immediate electron acceptor for the enzyme is believed to be ubiquinone. May donate electrons to ubiquinone. In Nicotiana tabacum (Common tobacco), this protein is NADH dehydrogenase [ubiquinone] iron-sulfur protein 8, mitochondrial.